Consider the following 680-residue polypeptide: Protein terminal ear1 homolog (680 aa).

One can recognise an RRM domain in the interval Ser223–Pro295. 2 disordered regions span residues Arg294–Gly415 and Thr593–Asp680. 2 stretches are compositionally biased toward low complexity: residues Pro328 to Gly340 and Ser379 to Gln403. The segment covering Lys404 to Trp413 has biased composition (gly residues). Low complexity-rich tracts occupy residues Ser602–Ser621 and Ser634–Ala648. Positions His656–Asp666 are enriched in basic and acidic residues.

As to expression, highly expressed in shoot apex and inflorescence apex, at intermediate levels in roots and at low levels in leaf blade and leaf sheath.

Probable RNA-binding protein. Involved in the regular timing (plastochron) of lateral organs formation. May regulate the rate of leaf initiation and the duration of vegetative phase. Seems to be redundant to the function of PLASTOCHRON1, but to act in an independent pathway. In Oryza sativa subsp. indica (Rice), this protein is Protein terminal ear1 homolog (PLA2).